The chain runs to 359 residues: Protein mab-21-like 2 (359 aa).

This sequence belongs to the mab-21 family.

It is found in the nucleus. Its subcellular location is the cytoplasm. Required for several aspects of embryonic development including normal development of the eye. This is Protein mab-21-like 2 (MAB21L2) from Homo sapiens (Human).